The sequence spans 242 residues: Sugar fermentation stimulation protein homolog (242 aa).

Belongs to the SfsA family.

This is Sugar fermentation stimulation protein homolog from Nitratidesulfovibrio vulgaris (strain DP4) (Desulfovibrio vulgaris).